Here is a 555-residue protein sequence, read N- to C-terminus: Phosphoglucomutase (555 aa).

Residues Thr45, Arg49, Ser148–His149, and Lys158 contribute to the substrate site. The Phosphoserine intermediate role is filled by Ser148. A Mg(2+)-binding site is contributed by Ser148. Positions 306, 308, and 310 each coordinate Mg(2+). Residues Asp310 to Arg311 and Glu393 to Ser395 contribute to the substrate site.

The protein belongs to the phosphohexose mutase family. It depends on Mg(2+) as a cofactor.

It carries out the reaction alpha-D-glucose 1-phosphate = alpha-D-glucose 6-phosphate. This enzyme participates in both the breakdown and synthesis of glucose. This Komagataeibacter xylinus (Gluconacetobacter xylinus) protein is Phosphoglucomutase (celB).